Reading from the N-terminus, the 652-residue chain is Leucine aminopeptidase 2 (652 aa).

A peptide is bound by residues 165 to 167 and 293 to 298; these read QLE and PYGGME. His322 contributes to the Zn(2+) binding site. Catalysis depends on Glu323, which acts as the Proton acceptor. The Zn(2+) site is built by His326 and Glu345. The Proton donor role is filled by Tyr411.

Belongs to the peptidase M1 family. Zn(2+) serves as cofactor.

It is found in the cytoplasm. It localises to the nucleus. The enzyme catalyses an epoxide + H2O = an ethanediol. In terms of biological role, aminopeptidase that preferentially cleaves di- and tripeptides. Also has low epoxide hydrolase activity (in vitro). Can hydrolyze the epoxide leukotriene LTA(4) but it forms preferentially 5,6-dihydroxy-7,9,11,14-eicosatetraenoic acid rather than the cytokine leukotriene B(4) as the product compared to the homologous mammalian enzyme (in vitro). This is Leucine aminopeptidase 2 from Candida glabrata (strain ATCC 2001 / BCRC 20586 / JCM 3761 / NBRC 0622 / NRRL Y-65 / CBS 138) (Yeast).